A 188-amino-acid polypeptide reads, in one-letter code: Segregation and condensation protein B (188 aa).

The protein belongs to the ScpB family. Homodimer. Homodimerization may be required to stabilize the binding of ScpA to the Smc head domains. Component of a cohesin-like complex composed of ScpA, ScpB and the Smc homodimer, in which ScpA and ScpB bind to the head domain of Smc. The presence of the three proteins is required for the association of the complex with DNA.

The protein resides in the cytoplasm. In terms of biological role, participates in chromosomal partition during cell division. May act via the formation of a condensin-like complex containing Smc and ScpA that pull DNA away from mid-cell into both cell halves. The polypeptide is Segregation and condensation protein B (Lactococcus lactis subsp. lactis (strain IL1403) (Streptococcus lactis)).